Consider the following 488-residue polypeptide: Ankyrin repeat domain-containing protein 13C (488 aa).

Positions 1 to 60 are disordered; that stretch reads MTGEKIRSVRKERKSGLDLLEPDEEPAATGPAKHRGSKIFSGGNHRISRSSSSPGDPDGA. The span at 41 to 59 shows a compositional bias: low complexity; it reads SGGNHRISRSSSSPGDPDG. ANK repeat units lie at residues 58–87, 90–119, and 123–152; these read DGAYPVHECVFRGDVRRLSSLIRTQNIAQK, HGNTPLHLAVMMGHKECAHLLLAHNAPVKV, and QGWSPLAEAISYGDRQMITALLRKLKQQSR.

The protein localises to the endoplasmic reticulum membrane. Its function is as follows. Acts as a molecular chaperone for G protein-coupled receptors, regulating their biogenesis and exit from the ER. This is Ankyrin repeat domain-containing protein 13C (ankrd13c) from Danio rerio (Zebrafish).